Consider the following 248-residue polypeptide: UPF0246 protein RPR_00055 (248 aa).

Belongs to the UPF0246 family.

This is UPF0246 protein RPR_00055 from Rickettsia peacockii (strain Rustic).